A 166-amino-acid chain; its full sequence is Transcription factor HES-5 (166 aa).

A bHLH domain is found at 16–72 (KNRLRKPVVEKMRRDRINSSIEQLKLLLEQEFARHQPNSKLEKADILEMAVSYLKHS). An Orange domain is found at 88-119 (YSEGYSWCLQEAVQFLTLHAASDTQMKLLYHF). A disordered region spans residues 125–144 (APAAPAKEPKAPGAAPPPAL). The WRPW motif signature appears at 163–166 (WRPW).

As to quaternary structure, transcription repression requires formation of a complex with a corepressor protein of the Groucho/TLE family. In terms of tissue distribution, expressed in fetal heart and brain tumors.

The protein localises to the nucleus. Its function is as follows. Transcriptional repressor of genes that require a bHLH protein for their transcription. Plays an important role as neurogenesis negative regulator. In Homo sapiens (Human), this protein is Transcription factor HES-5 (HES5).